The following is a 271-amino-acid chain: Ribosomal RNA small subunit methyltransferase A (271 aa).

Residues H11, L13, G38, E59, D84, and N109 each coordinate S-adenosyl-L-methionine.

Belongs to the class I-like SAM-binding methyltransferase superfamily. rRNA adenine N(6)-methyltransferase family. RsmA subfamily.

Its subcellular location is the cytoplasm. It catalyses the reaction adenosine(1518)/adenosine(1519) in 16S rRNA + 4 S-adenosyl-L-methionine = N(6)-dimethyladenosine(1518)/N(6)-dimethyladenosine(1519) in 16S rRNA + 4 S-adenosyl-L-homocysteine + 4 H(+). In terms of biological role, specifically dimethylates two adjacent adenosines (A1518 and A1519) in the loop of a conserved hairpin near the 3'-end of 16S rRNA in the 30S particle. May play a critical role in biogenesis of 30S subunits. The sequence is that of Ribosomal RNA small subunit methyltransferase A from Trichormus variabilis (strain ATCC 29413 / PCC 7937) (Anabaena variabilis).